The sequence spans 623 residues: Protein EDS1L (623 aa).

Ala2 carries the post-translational modification N-acetylalanine. Ser123 acts as the Nucleophile in catalysis. Residues Asp187 and His317 each act as charge relay system in the active site.

Homodimer. Interacts with RPS4, RPS6, SNC1, SRFR1, AvrRps4 and HopA1. Interacts with PAD4 (via N-terminus). Interacts with SAG101. EDS1-SAG101 and EDS1-PAD4 form separate complexes in pathogen-unchallenged cells.

It is found in the nucleus. The protein localises to the cytoplasm. It localises to the microsome. Its function is as follows. Positive regulator of basal resistance and of effector-triggered immunity specifically mediated by TIR-NB-LRR resistance proteins. Disruption by bacterial effector of EDS1-TIR-NB-LRR resistance protein interactions constitutes the first step in resistance activation. Triggers early plant defenses and hypersensitive response independently of PAD4, and then recruits PAD4 to potentiate plant defenses through the accumulation of salicylic acid. Nuclear localization is essential for basal and TIR-NB-LRR-conditioned immunity and for reprogramming defense gene expression, while cytoplasmic EDS1 is required to induce a complete immune response. Heterodimerization with PAD4 or SGA101 is necessary for TNL-mediated effector-triggered immunity. Contributes to nonhost resistance against E.amylovora. Has no direct lipase activity. The chain is Protein EDS1L from Arabidopsis thaliana (Mouse-ear cress).